The chain runs to 311 residues: Ribosomal RNA small subunit methyltransferase H (311 aa).

S-adenosyl-L-methionine contacts are provided by residues Ala-33–His-35, Asp-53, Phe-80, Asp-101, and Gln-108.

The protein belongs to the methyltransferase superfamily. RsmH family.

It is found in the cytoplasm. It catalyses the reaction cytidine(1402) in 16S rRNA + S-adenosyl-L-methionine = N(4)-methylcytidine(1402) in 16S rRNA + S-adenosyl-L-homocysteine + H(+). In terms of biological role, specifically methylates the N4 position of cytidine in position 1402 (C1402) of 16S rRNA. The polypeptide is Ribosomal RNA small subunit methyltransferase H (Geobacter sulfurreducens (strain ATCC 51573 / DSM 12127 / PCA)).